Consider the following 136-residue polypeptide: Ribosome-binding factor A (136 aa).

A disordered region spans residues 116–136 (AGNHKASDEEESDDKGHEDEQ).

The protein belongs to the RbfA family. As to quaternary structure, monomer. Binds 30S ribosomal subunits, but not 50S ribosomal subunits or 70S ribosomes.

The protein localises to the cytoplasm. Its function is as follows. One of several proteins that assist in the late maturation steps of the functional core of the 30S ribosomal subunit. Associates with free 30S ribosomal subunits (but not with 30S subunits that are part of 70S ribosomes or polysomes). Required for efficient processing of 16S rRNA. May interact with the 5'-terminal helix region of 16S rRNA. This Lachnoclostridium phytofermentans (strain ATCC 700394 / DSM 18823 / ISDg) (Clostridium phytofermentans) protein is Ribosome-binding factor A.